The sequence spans 194 residues: uncharacterized protein (194 aa).

Disordered stretches follow at residues 1–21 (MPKG…APPL) and 73–97 (PATV…PWPS). Residues 73–96 (PATVPPPPPGLGPPSERPCPPPWP) show a composition bias toward pro residues.

This is an uncharacterized protein from Mus musculus (Mouse).